The following is a 1336-amino-acid chain: Cytokinesis protein sepH (1336 aa).

Residues methionine 1–glutamate 10 are compositionally biased toward low complexity. Residues methionine 1–valine 46 form a disordered region. Over residues lysine 36–valine 46 the composition is skewed to basic and acidic residues. A Protein kinase domain is found at tyrosine 59 to isoleucine 309. ATP-binding positions include leucine 65 to valine 73 and lysine 88. Aspartate 181 serves as the catalytic Proton acceptor. Residues serine 368–aspartate 402 are disordered. A compositionally biased stretch (basic and acidic residues) spans histidine 384–aspartate 393. Residues alanine 654 to glutamate 682 adopt a coiled-coil conformation. Residues glutamate 1194 to lysine 1205 show a composition bias toward basic and acidic residues. The segment at glutamate 1194 to serine 1336 is disordered. A compositionally biased stretch (polar residues) spans threonine 1213–asparagine 1236. Composition is skewed to low complexity over residues proline 1253–proline 1264 and proline 1272–serine 1285. Basic residues predominate over residues serine 1315–proline 1327.

This sequence belongs to the protein kinase superfamily. Ser/Thr protein kinase family. CDC7 subfamily. The cofactor is Mg(2+).

The catalysed reaction is L-seryl-[protein] + ATP = O-phospho-L-seryl-[protein] + ADP + H(+). It carries out the reaction L-threonyl-[protein] + ATP = O-phospho-L-threonyl-[protein] + ADP + H(+). Required for early events during cytokinesis including localization of cytoskeletal components to the cytokinetic ring. The sequence is that of Cytokinesis protein sepH from Aspergillus niger (strain ATCC MYA-4892 / CBS 513.88 / FGSC A1513).